The sequence spans 765 residues: MISMDSTPTLNFETSDNLDGLPDGSNAFKINIDDLEFGQEIGKGAYGKIFKGEYFGTPVAIKEISLQPNDVKYKDLTKFIQREVAMLRFSHPNLVQFIGVSERGSSLYIVTEFVQGGDLAYYLFRNKFDDTPEQYIHRKVNVGSSSTPDLSDPTVHNGEKLVQLAWPLRIKIAYDVACAMAYLHSRNVIHRDLKSTNLLVGDNWRIKVCDMGFARTAQVGGGSRAKRTMTICGTTNCMAPEVVLGQDYNEACDVFSYGIVLSEIITRMDTTNNLRPSSLKYGLDVDVLLPLVPKDCPPPFLKLVLDCTEYDPDNRPTFKEITERLKSLTKKLSTPHILPPLRVLAQSPLTSPIQSPISTKNQFNPNLFKSIVHNNHNHSSSSNNSSGYNNNSNHNINITVNSININSSNINNNNNNNNINNNNNNNNNISFSGRQEELMSPISMGDESDLDSDDEDDSYTSSASSSRCNSRNGKIINGGKQMGYIIKHHYSSDLESSPNGNNINNNNNNNNNNNNNNNNNNNNNNNSGNNGICINSLSLGVSSSPIQIGLSSKSPTPPSMSPPTSVKSYHPNNNNNNININNTNTNINNNKISSSPPVKNSPKSNRFSNGSLKQQFQQYQQQQQQLFLNINEDDKELEELSKSIDDTFRLHFSPLNISPTQNNNNNNNNSNNNNGNVNHNHHHLNQHSHINGHLISPTIISSSSTTSSSTSTPSLVSLTSSRDHHHHHISVTSSPTNIKPLSSSIASNSSVFTPLGSGLTRTVQS.

A Protein kinase domain is found at L35–L328. Residues I41–I49 and K62 each bind ATP. D192 serves as the catalytic Proton acceptor. 7 disordered regions span residues I371–N393, S443–N477, S491–S527, P545–Q620, P654–L684, I699–I738, and A746–S765. A compositionally biased stretch (acidic residues) spans D446–S458. Composition is skewed to low complexity over residues Y459 to S470, N499 to S527, P562 to N605, N662 to N678, and I699 to S720.

Belongs to the protein kinase superfamily. TKL Ser/Thr protein kinase family.

The enzyme catalyses L-seryl-[protein] + ATP = O-phospho-L-seryl-[protein] + ADP + H(+). The catalysed reaction is L-threonyl-[protein] + ATP = O-phospho-L-threonyl-[protein] + ADP + H(+). This chain is Probable serine/threonine-protein kinase DDB_G0271402, found in Dictyostelium discoideum (Social amoeba).